Consider the following 870-residue polypeptide: Valine--tRNA ligase (870 aa).

Residues 1-13 (MTSQTFTTSSATP) show a composition bias toward polar residues. Positions 1 to 21 (MTSQTFTTSSATPPTRGVVPD) are disordered. The 'HIGH' region signature appears at 63–73 (PTVSGHLHPGH). Residues 479 to 505 (YDHPLLPDESALPVDPASQPPSGYQES) are disordered. The 'KMSKS' region signature appears at 595–599 (KMSKS). Lysine 598 lines the ATP pocket.

The protein belongs to the class-I aminoacyl-tRNA synthetase family. ValS type 2 subfamily. In terms of assembly, monomer.

It localises to the cytoplasm. The catalysed reaction is tRNA(Val) + L-valine + ATP = L-valyl-tRNA(Val) + AMP + diphosphate. In terms of biological role, catalyzes the attachment of valine to tRNA(Val). As ValRS can inadvertently accommodate and process structurally similar amino acids such as threonine, to avoid such errors, it has a 'posttransfer' editing activity that hydrolyzes mischarged Thr-tRNA(Val) in a tRNA-dependent manner. In Cutibacterium acnes (strain DSM 16379 / KPA171202) (Propionibacterium acnes), this protein is Valine--tRNA ligase.